Consider the following 405-residue polypeptide: Venom serine protease 34 (405 aa).

An N-terminal signal peptide occupies residues 1–35 (MIFTNNIAAFQNVVLVKKVKIVLLIFYGSIMFSMT). Cystine bridges form between cysteine 42-cysteine 70 and cysteine 95-cysteine 111. Residues 42–147 (CDYYQNLNLG…EVRPIKRVKD (106 aa)) enclose the CUB domain. A glycan (N-linked (GlcNAc...) asparagine) is linked at asparagine 113. In terms of domain architecture, Peptidase S1 spans 161–397 (IVGGTNTGIN…YIDWIVSQTP (237 aa)). Residues cysteine 188 and cysteine 204 are joined by a disulfide bond. Histidine 203 (charge relay system) is an active-site residue. N-linked (GlcNAc...) asparagine glycans are attached at residues asparagine 209 and asparagine 229. Residue aspartate 257 is the Charge relay system of the active site. Intrachain disulfides connect cysteine 323-cysteine 336 and cysteine 345-cysteine 375. The Charge relay system role is filled by serine 349.

It belongs to the peptidase S1 family. In terms of tissue distribution, expressed by the venom duct.

The protein resides in the secreted. This is Venom serine protease 34 from Apis mellifera (Honeybee).